We begin with the raw amino-acid sequence, 347 residues long: Isopentenyl-diphosphate delta-isomerase (347 aa).

Residue 11–12 (RK) coordinates substrate. Residues 72–74 (AMT), S102, and N131 contribute to the FMN site. Residue Q161 participates in substrate binding. E162 contacts Mg(2+). FMN contacts are provided by residues K192, T222, and 287–288 (AG).

This sequence belongs to the IPP isomerase type 2 family. As to quaternary structure, homooctamer. Dimer of tetramers. FMN is required as a cofactor. The cofactor is NADPH. Mg(2+) serves as cofactor.

The protein localises to the cytoplasm. The enzyme catalyses isopentenyl diphosphate = dimethylallyl diphosphate. Functionally, involved in the biosynthesis of isoprenoids. Catalyzes the 1,3-allylic rearrangement of the homoallylic substrate isopentenyl (IPP) to its allylic isomer, dimethylallyl diphosphate (DMAPP). This is Isopentenyl-diphosphate delta-isomerase from Lactococcus lactis subsp. lactis (strain IL1403) (Streptococcus lactis).